Here is a 476-residue protein sequence, read N- to C-terminus: MGGARKPRTLAEKVWDDHVVVAGQGYHQDRGPDLIYIDLHLVHEVTSPQAFDGLRLAGRWVRRPDLTVATEDHNVPTVDIDKPIADPVSRIQVETLRRNCAEFGVRLHPMGDIEQGIVHVVGPQLGLTQPGMTIVCGDSHTSTHGAFGAIAMGIGTSEIEHVLATQTLPLRPFKTMAVTVDGRLPAGVTAKDIILALIAKIGTGGGQGYVLEYRGSVIESMSMEGRMTICNMSIEAGARAGMVAPDETTYEFLRDRPHAPTGKQWDAAVAYWQQLRTDDDAVFDTEVYLDATSLSPFVTWGTNPGQGVPLAASVPDPELMIDDVARQAAEKALAYMDLRPGTPMRDIAVDAVFVGSCTNGRIEDLRLVADVLRGHKVADGVRMLIVPGSMRVRAQAEAEGLGEIFITAGAQWRQPGCSMCLGMNPDQLAPGERCAATSNRNFEGRQGKGGRTHLVSPAVAAATAVRGTFSAPADLN.

Positions 357, 417, and 420 each coordinate [4Fe-4S] cluster.

It belongs to the aconitase/IPM isomerase family. LeuC type 1 subfamily. Heterodimer of LeuC and LeuD. [4Fe-4S] cluster serves as cofactor.

The enzyme catalyses (2R,3S)-3-isopropylmalate = (2S)-2-isopropylmalate. It functions in the pathway amino-acid biosynthesis; L-leucine biosynthesis; L-leucine from 3-methyl-2-oxobutanoate: step 2/4. Catalyzes the isomerization between 2-isopropylmalate and 3-isopropylmalate, via the formation of 2-isopropylmaleate. In Mycobacterium leprae (strain TN), this protein is 3-isopropylmalate dehydratase large subunit.